Consider the following 180-residue polypeptide: Small ribosomal subunit protein uS4 (180 aa).

The 73-residue stretch at 102-174 (RRLQTMLVRK…PARKLEQKEE (73 aa)) folds into the S4 RNA-binding domain. A disordered region spans residues 154 to 180 (VPFSPLANPEHPARKLEQKEETNEESA). The segment covering 164-174 (HPARKLEQKEE) has biased composition (basic and acidic residues).

This sequence belongs to the universal ribosomal protein uS4 family. As to quaternary structure, part of the 30S ribosomal subunit. Contacts protein S5. The interaction surface between S4 and S5 is involved in control of translational fidelity.

Functionally, one of the primary rRNA binding proteins, it binds directly to 16S rRNA where it nucleates assembly of the body of the 30S subunit. In terms of biological role, with S5 and S12 plays an important role in translational accuracy. This is Small ribosomal subunit protein uS4 from Nanoarchaeum equitans (strain Kin4-M).